The primary structure comprises 51 residues: Large ribosomal subunit protein bL33 (51 aa).

It belongs to the bacterial ribosomal protein bL33 family.

The sequence is that of Large ribosomal subunit protein bL33 from Idiomarina loihiensis (strain ATCC BAA-735 / DSM 15497 / L2-TR).